The primary structure comprises 389 residues: tRNA-specific 2-thiouridylase MnmA (389 aa).

Residues 35–42 (GMSGGVDS) and Met-61 contribute to the ATP site. The segment at 121 to 123 (NPD) is interaction with target base in tRNA. Cys-126 functions as the Nucleophile in the catalytic mechanism. A disulfide bridge connects residues Cys-126 and Cys-223. Gly-151 provides a ligand contact to ATP. Residues 173–175 (KDQ) are interaction with tRNA. The active-site Cysteine persulfide intermediate is the Cys-223. The interaction with tRNA stretch occupies residues 335–336 (RY).

Belongs to the MnmA/TRMU family.

It localises to the cytoplasm. The catalysed reaction is S-sulfanyl-L-cysteinyl-[protein] + uridine(34) in tRNA + AH2 + ATP = 2-thiouridine(34) in tRNA + L-cysteinyl-[protein] + A + AMP + diphosphate + H(+). Functionally, catalyzes the 2-thiolation of uridine at the wobble position (U34) of tRNA, leading to the formation of s(2)U34. This Mannheimia succiniciproducens (strain KCTC 0769BP / MBEL55E) protein is tRNA-specific 2-thiouridylase MnmA.